A 433-amino-acid polypeptide reads, in one-letter code: Enolase (433 aa).

Residue glutamine 167 participates in (2R)-2-phosphoglycerate binding. The Proton donor role is filled by glutamate 209. Residues aspartate 246, glutamate 291, and aspartate 318 each contribute to the Mg(2+) site. (2R)-2-phosphoglycerate-binding residues include lysine 343, arginine 372, serine 373, and lysine 394. Lysine 343 functions as the Proton acceptor in the catalytic mechanism.

This sequence belongs to the enolase family. Component of the RNA degradosome, a multiprotein complex involved in RNA processing and mRNA degradation. Requires Mg(2+) as cofactor.

It localises to the cytoplasm. Its subcellular location is the secreted. The protein resides in the cell surface. The catalysed reaction is (2R)-2-phosphoglycerate = phosphoenolpyruvate + H2O. Its pathway is carbohydrate degradation; glycolysis; pyruvate from D-glyceraldehyde 3-phosphate: step 4/5. Catalyzes the reversible conversion of 2-phosphoglycerate (2-PG) into phosphoenolpyruvate (PEP). It is essential for the degradation of carbohydrates via glycolysis. The polypeptide is Enolase (Shewanella frigidimarina (strain NCIMB 400)).